The following is a 616-amino-acid chain: MSSSITDEKISGEQQQPAGRKLYYNTSTFAEPPLVDGEGNPINYEPEVYNPDHEKLYHNPSLPAQSIQDTRDDELLERVYSQDQGVEYEEDEEDKPNLSAASIKSYALTRFTSLLHIHEFSWENVNPIPELRKMTWQNWNYFFMGYFAWLSAAWAFFCVSVSVAPLAELYDRPTKDITWGLGLVLFVRSAGAVIFGLWTDKSSRKWPYITCLFLFVIAQLCTPWCDTYEKFLGVRWITGIAMGGIYGCASATAIEDAPVKARSFLSGLFFSAYAMGFIFAIIFYRAFGYFRDDGWKILFWFSIFLPILLIFWRLLWPETKYFTKVLKARKLILSDAVKANGGEPLPKANFKQKMVSMKRTVQKYWLLFAYLVVLLVGPNYLTHASQDLLPTMLRAQLGLSKDAVTVIVVVTNIGAICGGMIFGQFMEVTGRRLGLLIACTMGGCFTYPAFMLRSEKAILGAGFMLYFCVFGVWGILPIHLAELAPADARALVAGLSYQLGNLASAAASTIETQLADRYPLERDASGAVIKEDYAKVMAILTGSVFIFTFACVFVGHEKFHRDLSSPVMKKYINQVEEYEADGLSISDIVEQKTECASVKMIDSNVSKTYEEHIETV.

A compositionally biased stretch (basic and acidic residues) spans 1 to 11 (MSSSITDEKIS). The disordered stretch occupies residues 1 to 65 (MSSSITDEKI…LYHNPSLPAQ (65 aa)). S2 carries the N-acetylserine modification. At 2 to 140 (SSSITDEKIS…LRKMTWQNWN (139 aa)) the chain is on the cytoplasmic side. S4 is modified (phosphoserine). K9 is covalently cross-linked (Glycyl lysine isopeptide (Lys-Gly) (interchain with G-Cter in ubiquitin)). 3 positions are modified to phosphoserine: S11, S61, and S66. T70 carries the post-translational modification Phosphothreonine. The chain crosses the membrane as a helical span at residues 141–161 (YFFMGYFAWLSAAWAFFCVSV). Residues 162-176 (SVAPLAELYDRPTKD) are Extracellular-facing. A helical transmembrane segment spans residues 177 to 197 (ITWGLGLVLFVRSAGAVIFGL). At 198–205 (WTDKSSRK) the chain is on the cytoplasmic side. Residues 206-226 (WPYITCLFLFVIAQLCTPWCD) form a helical membrane-spanning segment. Topologically, residues 227–230 (TYEK) are extracellular. Residues 231–251 (FLGVRWITGIAMGGIYGCASA) form a helical membrane-spanning segment. The Cytoplasmic segment spans residues 252–263 (TAIEDAPVKARS). The helical transmembrane segment at 264-284 (FLSGLFFSAYAMGFIFAIIFY) threads the bilayer. Over 285-296 (RAFGYFRDDGWK) the chain is Extracellular. A helical transmembrane segment spans residues 297–317 (ILFWFSIFLPILLIFWRLLWP). Residues 318–363 (ETKYFTKVLKARKLILSDAVKANGGEPLPKANFKQKMVSMKRTVQK) are Cytoplasmic-facing. Residue K338 forms a Glycyl lysine isopeptide (Lys-Gly) (interchain with G-Cter in ubiquitin) linkage. The helical transmembrane segment at 364-384 (YWLLFAYLVVLLVGPNYLTHA) threads the bilayer. The Extracellular segment spans residues 385 to 402 (SQDLLPTMLRAQLGLSKD). Residues 403-423 (AVTVIVVVTNIGAICGGMIFG) traverse the membrane as a helical segment. Residues 424–432 (QFMEVTGRR) are Cytoplasmic-facing. Residues 433–453 (LGLLIACTMGGCFTYPAFMLR) form a helical membrane-spanning segment. Residues 454–457 (SEKA) lie on the Extracellular side of the membrane. A helical membrane pass occupies residues 458 to 478 (ILGAGFMLYFCVFGVWGILPI). Topologically, residues 479–489 (HLAELAPADAR) are cytoplasmic. Residues 490 to 510 (ALVAGLSYQLGNLASAAASTI) traverse the membrane as a helical segment. Over 511 to 535 (ETQLADRYPLERDASGAVIKEDYAK) the chain is Extracellular. Residues 536–556 (VMAILTGSVFIFTFACVFVGH) form a helical membrane-spanning segment. Residues 557-616 (EKFHRDLSSPVMKKYINQVEEYEADGLSISDIVEQKTECASVKMIDSNVSKTYEEHIETV) lie on the Cytoplasmic side of the membrane. S584, S603, and S606 each carry phosphoserine.

It belongs to the major facilitator superfamily. Sugar transporter (TC 2.A.1.1) family.

It is found in the membrane. Functionally, essential to lactate transport. This Saccharomyces cerevisiae (strain ATCC 204508 / S288c) (Baker's yeast) protein is Carboxylic acid transporter protein homolog (JEN1).